The chain runs to 1728 residues: Nebulin-related-anchoring protein (1728 aa).

Residues 4–64 (QACSRCGYGV…HAHNPKNNTF (61 aa)) form the LIM zinc-binding domain. 41 Nebulin repeats span residues 173 to 200 (TPAY…ERVS), 201 to 235 (TFTP…QQRG), 244 to 271 (TPAY…REMK), 313 to 340 (TPAY…KMKG), 345 to 379 (HSLA…NSKG), 386 to 414 (ETPQ…TQLR), 416 to 450 (HYDG…HDVV), 484 to 518 (KFSS…RNKL), 519 to 553 (NYTL…KTKG), 555 to 589 (GFEM…KMKG), 599 to 623 (LLHS…ESKT), 624 to 658 (HFNL…DYTV), 659 to 689 (LPED…WMRG), 699 to 721 (NLEQ…RVDE), 723 to 757 (KFTS…QSVH), 758 to 792 (QYTI…KQKA), 794 to 828 (GFEL…RSRG), 841 to 866 (QMSH…DTRS), 867 to 893 (QCHI…VGYR), 898 to 932 (CFTA…WMKG), 943 to 960 (VEQA…KYRQ), 966 to 1000 (KFTS…NVKH), 1001 to 1035 (HYTQ…RLRD), 1037 to 1071 (GYKL…RMKG), 1075 to 1109 (GSRS…HAKA), 1110 to 1136 (HFHL…QDYR), 1141 to 1175 (QHTV…FMRG), 1180 to 1203 (VPGT…KYRQ), 1209 to 1243 (KYTA…DARH), 1244 to 1278 (QYTM…NLRA), 1280 to 1314 (GYKL…KERG), 1318 to 1352 (GVRN…SSQA), 1353 to 1379 (QCHL…HDYR), 1384 to 1418 (EFTA…GMKG), 1425 to 1446 (QSPQ…KYRK), 1452 to 1478 (KFTT…RLYR), 1487 to 1521 (RYTP…QSRA), 1523 to 1557 (GYDF…RDRG), 1561 to 1595 (GYRS…KGRS), 1596 to 1630 (QFHS…QHTS), and 1637 to 1661 (LKHA…LTRG). Threonine 203 is modified (phosphothreonine). Serine 1078 bears the Phosphoserine mark.

In terms of assembly, interacts with actin, alpha-actinin, KLHL41, TLN1 and VCL. Interacts with CSRP3. Expressed in cardiac and skeletal muscle. Not detected in kidney, spleen, liver, brain, lung, stomach or uterus.

Its function is as follows. May be involved in anchoring the terminal actin filaments in the myofibril to the membrane and in transmitting tension from the myofibrils to the extracellular matrix. This Mus musculus (Mouse) protein is Nebulin-related-anchoring protein.